The following is a 520-amino-acid chain: MSQQVIIFDTTLRDGEQALQASLSVKEKLQIALALERMGVDIMEVGFPVSSPGDFESVRTIAQQVKNSRVCALARCVDKDIDVAAEALRIAEAFRIHVFLATSTLHIESKLKRSFDDVLAMAVHSVKRARNYTDDVEFSCEDAGRTPIDNLCRVVEAAITAGATTINIPDTVGYTTPYQFGGIITDLYERVPNIDKAIISVHCHDDLGMSVANSITAVQAGARQVEGTINGLGERAGNCSLEEVIMAIKVRHEMLGVHTNINHQEIYRTSQLVSKICNMPIPGNKAIVGSNAFAHSSGIHQDGVLKNRENYEIMTPESIGLKEVQLNLTSRSGRAAVKHRMEEMGYQDKDYNLDSLYDAFLKLADKKGQVFDYDLEALAFINKQQEEPEYYRLDYFSVQSGSSVMATASVKLVCGEEIKSEAATGNGPVDAVYQAINRITDYPIELVKYQLSAKGQGKDALGQVDIVVDHKGRRFHGVGLATDIVESSAKALVHVLNNIWRAHQVEKEKQRLQQNNQEMV.

The Pyruvate carboxyltransferase domain occupies 5–267 (VIIFDTTLRD…HTNINHQEIY (263 aa)). The Mn(2+) site is built by D14, H202, H204, and N238. The tract at residues 392–520 (RLDYFSVQSG…RLQQNNQEMV (129 aa)) is regulatory domain.

Belongs to the alpha-IPM synthase/homocitrate synthase family. LeuA type 1 subfamily. In terms of assembly, homodimer. Requires Mn(2+) as cofactor.

Its subcellular location is the cytoplasm. It carries out the reaction 3-methyl-2-oxobutanoate + acetyl-CoA + H2O = (2S)-2-isopropylmalate + CoA + H(+). The protein operates within amino-acid biosynthesis; L-leucine biosynthesis; L-leucine from 3-methyl-2-oxobutanoate: step 1/4. Catalyzes the condensation of the acetyl group of acetyl-CoA with 3-methyl-2-oxobutanoate (2-ketoisovalerate) to form 3-carboxy-3-hydroxy-4-methylpentanoate (2-isopropylmalate). The polypeptide is 2-isopropylmalate synthase (Yersinia pseudotuberculosis serotype O:1b (strain IP 31758)).